Here is a 239-residue protein sequence, read N- to C-terminus: Ribosomal RNA small subunit methyltransferase G (239 aa).

S-adenosyl-L-methionine contacts are provided by residues Gly-77, Phe-82, 128–129 (AE), and Arg-147.

This sequence belongs to the methyltransferase superfamily. RNA methyltransferase RsmG family.

The protein resides in the cytoplasm. Functionally, specifically methylates the N7 position of guanine in position 535 of 16S rRNA. This is Ribosomal RNA small subunit methyltransferase G from Bacillus mycoides (strain KBAB4) (Bacillus weihenstephanensis).